A 290-amino-acid polypeptide reads, in one-letter code: Ribosomal RNA small subunit methyltransferase A (290 aa).

The S-adenosyl-L-methionine site is built by Asn27, Leu29, Gly54, Glu75, Asp100, and Asn125.

It belongs to the class I-like SAM-binding methyltransferase superfamily. rRNA adenine N(6)-methyltransferase family. RsmA subfamily.

It localises to the cytoplasm. The catalysed reaction is adenosine(1518)/adenosine(1519) in 16S rRNA + 4 S-adenosyl-L-methionine = N(6)-dimethyladenosine(1518)/N(6)-dimethyladenosine(1519) in 16S rRNA + 4 S-adenosyl-L-homocysteine + 4 H(+). Its function is as follows. Specifically dimethylates two adjacent adenosines (A1518 and A1519) in the loop of a conserved hairpin near the 3'-end of 16S rRNA in the 30S particle. May play a critical role in biogenesis of 30S subunits. The polypeptide is Ribosomal RNA small subunit methyltransferase A (Streptococcus equi subsp. zooepidemicus (strain H70)).